The primary structure comprises 177 residues: Large ribosomal subunit protein uL6 (177 aa).

This sequence belongs to the universal ribosomal protein uL6 family. In terms of assembly, part of the 50S ribosomal subunit.

In terms of biological role, this protein binds to the 23S rRNA, and is important in its secondary structure. It is located near the subunit interface in the base of the L7/L12 stalk, and near the tRNA binding site of the peptidyltransferase center. In Verminephrobacter eiseniae (strain EF01-2), this protein is Large ribosomal subunit protein uL6.